We begin with the raw amino-acid sequence, 231 residues long: Monothiol glutaredoxin-6 (231 aa).

Residues 1 to 29 (MIPSNKRNARILSITTLLLLLVFFVAQNA) form the signal peptide. The region spanning 116 to 219 (QKEYSLILDL…ESLQVWSDGK (104 aa)) is the Glutaredoxin domain. [2Fe-2S] cluster is bound at residue C136.

The protein belongs to the glutaredoxin family. Monothiol subfamily.

Its subcellular location is the vacuole. The protein is Monothiol glutaredoxin-6 (GRX6) of Saccharomyces cerevisiae (strain ATCC 204508 / S288c) (Baker's yeast).